Reading from the N-terminus, the 437-residue chain is Arginine biosynthesis bifunctional protein ArgJ, mitochondrial (437 aa).

Residues Thr-173, Lys-200, Thr-211, Glu-297, Asn-432, and Ser-437 each coordinate substrate. The active-site Nucleophile is the Thr-211.

This sequence belongs to the ArgJ family. In terms of assembly, heterodimer of an alpha and a beta chain. In terms of processing, the alpha and beta chains are autoproteolytically processed from a single precursor protein within the mitochondrion.

The protein resides in the mitochondrion matrix. The enzyme catalyses N(2)-acetyl-L-ornithine + L-glutamate = N-acetyl-L-glutamate + L-ornithine. It catalyses the reaction L-glutamate + acetyl-CoA = N-acetyl-L-glutamate + CoA + H(+). Its pathway is amino-acid biosynthesis; L-arginine biosynthesis; L-ornithine and N-acetyl-L-glutamate from L-glutamate and N(2)-acetyl-L-ornithine (cyclic): step 1/1. It participates in amino-acid biosynthesis; L-arginine biosynthesis; N(2)-acetyl-L-ornithine from L-glutamate: step 1/4. Its function is as follows. Catalyzes two activities which are involved in the cyclic version of arginine biosynthesis: the synthesis of acetylglutamate from glutamate and acetyl-CoA, and of ornithine by transacetylation between acetylornithine and glutamate. The polypeptide is Arginine biosynthesis bifunctional protein ArgJ, mitochondrial (Zygosaccharomyces rouxii (strain ATCC 2623 / CBS 732 / NBRC 1130 / NCYC 568 / NRRL Y-229)).